Here is a 487-residue protein sequence, read N- to C-terminus: MRGSGRSDIVISAVDALDICITLARNDCDKYPGSVAAKLGVSSGLIYLVGQPTINWGDSDQPRPFRQRRYFYYLSGVEEADCYLTYDIKNDLLTLYVPDFDLHRAIWMGPTLTVKEARERYDVDQVRYHASLKGDIQRWADNYNKTSLLYILHDTQKPQVLSNELRLDDELLLPAMDAARGIKDEHEIRMIREANRVSALAHRKVLENVLRMSTEAEIEGLFLDTCISHGAKNQAYEIIAGSGENAAVLHYVKNNEPLQGRQLVCLDAGAEWNCYASDVTRTFPLAADWPTARARDIYQLVEEMQEECIKRIQKGVRFLDLQVLAHVIAIEGLMRLGILKGGSVEEIRESGASTVFFPHGLGHHVGLEVHDVSAKRLTAVEGDKEYYSSILVPSMSHCPCTLSAPLLEEGMVVTVEPGIYFSRLALANARKLAFAKYINFDEAEKYIPIGGVRIEDDILVTSSGHENLTTAPKGEEMLEIIRRGIDS.

Mn(2+)-binding residues include D267, D278, E416, and E455.

The protein belongs to the peptidase M24B family. It depends on Mn(2+) as a cofactor.

It carries out the reaction Release of any N-terminal amino acid, including proline, that is linked to proline, even from a dipeptide or tripeptide.. Its function is as follows. Catalyzes the removal of a penultimate prolyl residue from the N-termini of peptides. In Aspergillus fumigatus (strain CBS 144.89 / FGSC A1163 / CEA10) (Neosartorya fumigata), this protein is Probable Xaa-Pro aminopeptidase AFUB_014460.